The sequence spans 366 residues: Growth hormone secretagogue receptor type 1 (366 aa).

At 1-40 (MWNATPSEEPGFNLTLADLDWDASPGNDSLGDELLQLFPA) the chain is on the extracellular side. N-linked (GlcNAc...) asparagine glycans are attached at residues Asn-13 and Asn-27. Residues 41–66 (PLLAGVTATCVALFVVGIAGNLLTML) form a helical membrane-spanning segment. At 67–72 (VVSRFR) the chain is on the cytoplasmic side. A helical membrane pass occupies residues 73-96 (ELRTTTNLYLSSMAFSDLLIFLCM). Topologically, residues 97–117 (PLDLVRLWQYRPWNFGDLLCK) are extracellular. Cys-116 and Cys-198 are disulfide-bonded. A helical transmembrane segment spans residues 118–139 (LFQFVSESCTYATVLTITALSV). The Cytoplasmic portion of the chain corresponds to 140 to 162 (ERYFAICFPLRAKVVVTKGRVKL). Residues 163-183 (VIFVIWAVAFCSAGPIFVLVG) form a helical membrane-spanning segment. At 184 to 211 (VEHENGTDPWDTNECRPTEFAVRSGLLT) the chain is on the extracellular side. A helical transmembrane segment spans residues 212–235 (VMVWVSSIFFFLPVFCLTVLYSLI). Topologically, residues 236-263 (GRKLWRRRRGDAVVGASLRDQNHKQTVK) are cytoplasmic. The helical transmembrane segment at 264–285 (MLAVVVFAFILCWLPFHVGRYL) threads the bilayer. The Extracellular portion of the chain corresponds to 286-302 (FSKSFEPGSLEIAQISQ). A helical membrane pass occupies residues 303-326 (YCNLVSFVLFYLSAAINPILYNIM). The Cytoplasmic segment spans residues 327–366 (SKKYRVAVFRLLGFEPFSQRKLSTLKDESSRAWTESSINT).

This sequence belongs to the G-protein coupled receptor 1 family. As to expression, pituitary and hypothalamus.

It is found in the cell membrane. Its function is as follows. Receptor for ghrelin, coupled to G-alpha-11 proteins. Stimulates growth hormone secretion. Also binds other growth hormone releasing peptides (GHRP) (e.g. Met-enkephalin and GHRP-6) as well as non-peptide, low molecular weight secretagogues (e.g. L-692,429, MK-0677, adenosine). In Homo sapiens (Human), this protein is Growth hormone secretagogue receptor type 1 (GHSR).